Reading from the N-terminus, the 86-residue chain is Immunity protein CdiI-1 (86 aa).

Interacts with the C-terminal fragment (CT) of cognate toxin protein CdiA-EC869.

Its function is as follows. Immunity protein component of a toxin-immunity protein module, which functions as a cellular contact-dependent growth inhibition (CDI) system. CDI modules allow bacteria to communicate with and inhibit the growth of closely related neighboring bacteria in a contact-dependent fashion. Neutralizes the toxic activity of cognate toxin CdiA-EC869 (the C-terminal 289 residue CT fragment). Does not inhibit toxic activity of CdiA from other toxin-immunity modules or strains of E.coli. This chain is Immunity protein CdiI-1, found in Escherichia coli O157:H7 (strain EC869).